Here is a 222-residue protein sequence, read N- to C-terminus: MSFTRRKFVLGMGTVIFFTGSASSLLANTRQEKEVRYAMIHDESRCNGCNICARACRKTNHVPAQGSRLSIAHIPVTDNDNETQYHFFRQSCQHCEDAPCIDVCPTGASWRDEQGIVRVEKSQCIGCSYCIGACPYQVRYLNPVTKVADKCDFCAESRLAKGFPPICVSACPEHALIFGREDSPEIQAWLQQNKYYQYQLPGAGKPHLYRRFGQHLIKKENV.

The tat-type signal signal peptide spans 1–27 (MSFTRRKFVLGMGTVIFFTGSASSLLA). 4Fe-4S ferredoxin-type domains lie at 37–67 (YAMI…AQGS), 83–114 (TQYH…RDEQ), and 115–144 (GIVR…LNPV). 16 residues coordinate [4Fe-4S] cluster: Cys46, Cys49, Cys52, Cys56, Cys92, Cys95, Cys100, Cys104, Cys124, Cys127, Cys130, Cys134, Cys151, Cys154, Cys167, and Cys171.

Exported by the Tat system. The position of the signal peptide cleavage has not been experimentally proven. Can also be exported by the Sec system.

This is an uncharacterized protein from Escherichia coli (strain K12).